The following is a 428-amino-acid chain: Monocarboxylate transporter 13 (428 aa).

At 1–10 (MVHRTEPPDG) the chain is on the cytoplasmic side. Transmembrane regions (helical) follow at residues 11–31 (GWGWMVVLSAFFQSALVFGVL), 52–72 (VSWIASIGIAVQQFGSPIGSA), 81–101 (PVVMTGGILAALGMLLASFAT), 106–126 (LYLSIGLLSGSGWALTFTPTL), 139–159 (LAMGLALTGVGISSFAFAPLF), 172–192 (LLLVSALSLHLVACGALLRPL), 221–241 (VALTLINTGYFIPYVHLVAHL), 244–264 (LGWDPLPAAFLLSVAAISDLV), 283–303 (LLMLWTTLTGVSLALFPVAQA), 309–329 (VLAVAYGFTSGALTPVAFSVI), 338–358 (IYCGLGLVQMIESVGGLLGAP), and 374–394 (FVVAGAFLLAGSGVLITLPHF). Over 395 to 428 (FSCISLSTSRPQDLVIEAPDTKIPLPKEEGLGEN) the chain is Cytoplasmic.

It belongs to the major facilitator superfamily. Monocarboxylate porter (TC 2.A.1.13) family.

It localises to the golgi apparatus membrane. The protein resides in the cell membrane. In terms of biological role, proton-linked monocarboxylate transporter. May catalyze the transport of monocarboxylates across the plasma membrane. The sequence is that of Monocarboxylate transporter 13 (Slc16a13) from Rattus norvegicus (Rat).